We begin with the raw amino-acid sequence, 248 residues long: DNA repair protein RecO (248 aa).

It belongs to the RecO family.

Functionally, involved in DNA repair and RecF pathway recombination. This chain is DNA repair protein RecO, found in Oleidesulfovibrio alaskensis (strain ATCC BAA-1058 / DSM 17464 / G20) (Desulfovibrio alaskensis).